Consider the following 84-residue polypeptide: U8-theraphotoxin-Hhn1a (84 aa).

An N-terminal signal peptide occupies residues methionine 1–cysteine 21. 5 disulfide bridges follow: cysteine 23-cysteine 35, cysteine 29-cysteine 44, cysteine 34-cysteine 67, cysteine 54-cysteine 75, and cysteine 69-cysteine 81.

The protein belongs to the AVIT (prokineticin) family. In terms of tissue distribution, expressed by the venom gland.

The protein resides in the secreted. The sequence is that of U8-theraphotoxin-Hhn1a from Cyriopagopus hainanus (Chinese bird spider).